A 488-amino-acid polypeptide reads, in one-letter code: Alpha,alpha-trehalose-phosphate synthase [UDP-forming] 56 kDa subunit (488 aa).

Positions 102 and 156 each coordinate D-glucose 6-phosphate. Positions 293 and 298 each coordinate UDP. The UDP-alpha-D-glucose site is built by Arg293 and Lys298. D-glucose 6-phosphate is bound at residue Arg331. UDP contacts are provided by residues Ile370 and 396–400 (LVSYE). Residues Ile370 and 392 to 400 (DGMNLVSYE) contribute to the UDP-alpha-D-glucose site.

This sequence belongs to the glycosyltransferase 20 family. In terms of assembly, trehalose synthase/phosphatase complex contains three or four polypeptides of 56 kDa (TPS1), 102 kDa (TPS2), 115 kDa (TPS3) and 123 kDa (TSL1).

The enzyme catalyses D-glucose 6-phosphate + UDP-alpha-D-glucose = alpha,alpha-trehalose 6-phosphate + UDP + H(+). It participates in carbohydrate biosynthesis. Functionally, synthase catalytic subunit of the trehalose synthase complex that catalyzes the production of trehalose from glucose-6-phosphate and UDP-alpha-D-glucose in a two step process. Can function independently of the complex. This chain is Alpha,alpha-trehalose-phosphate synthase [UDP-forming] 56 kDa subunit, found in Kluyveromyces lactis (strain ATCC 8585 / CBS 2359 / DSM 70799 / NBRC 1267 / NRRL Y-1140 / WM37) (Yeast).